The sequence spans 447 residues: Tubulin alpha-1 chain (447 aa).

Residues glutamine 11, glutamate 72, serine 141, glycine 145, threonine 146, threonine 180, asparagine 207, and asparagine 229 each contribute to the GTP site. Glutamate 72 provides a ligand contact to Mg(2+). Glutamate 255 is an active-site residue.

It belongs to the tubulin family. In terms of assembly, dimer of alpha and beta chains. A typical microtubule is a hollow water-filled tube with an outer diameter of 25 nm and an inner diameter of 15 nM. Alpha-beta heterodimers associate head-to-tail to form protofilaments running lengthwise along the microtubule wall with the beta-tubulin subunit facing the microtubule plus end conferring a structural polarity. Microtubules usually have 13 protofilaments but different protofilament numbers can be found in some organisms and specialized cells. It depends on Mg(2+) as a cofactor.

The protein resides in the cytoplasm. The protein localises to the cytoskeleton. The enzyme catalyses GTP + H2O = GDP + phosphate + H(+). Its function is as follows. Tubulin is the major constituent of microtubules, a cylinder consisting of laterally associated linear protofilaments composed of alpha- and beta-tubulin heterodimers. Microtubules grow by the addition of GTP-tubulin dimers to the microtubule end, where a stabilizing cap forms. Below the cap, tubulin dimers are in GDP-bound state, owing to GTPase activity of alpha-tubulin. The chain is Tubulin alpha-1 chain (TUB1) from Saccharomyces cerevisiae (strain ATCC 204508 / S288c) (Baker's yeast).